A 1019-amino-acid polypeptide reads, in one-letter code: Photoactivated adenylate cyclase subunit alpha-like protein ST- (1019 aa).

Residues 55–148 (LRRLMYLSAS…GRMYGEWHMK (94 aa)) form the BLUF 1 domain. In terms of domain architecture, Guanylate cyclase 1 spans 204-332 (VLTFIYLVEF…DCINTASRIT (129 aa)). The BLUF 2 domain maps to 467–559 (LITLTYISQA…RVYGTPLDMT (93 aa)). The Guanylate cyclase 2 domain maps to 615 to 744 (VMLATDICSF…EVSARVMAVE (130 aa)). Disordered regions lie at residues 801-846 (EDHL…TRPH), 887-923 (QIAA…DQPA), and 963-993 (EGHR…NRAT). The span at 821–834 (RHQRPGPGRPRRGH) shows a compositional bias: basic residues.

Belongs to the adenylyl cyclase class-4/guanylyl cyclase family. Heterotetramer of two alpha and two beta subunits.

The protein resides in the cell projection. The protein localises to the cilium. Its subcellular location is the flagellum. This chain is Photoactivated adenylate cyclase subunit alpha-like protein ST-, found in Euglena gracilis.